The primary structure comprises 245 residues: Ribonuclease PH (245 aa).

Phosphate is bound by residues Arg-86 and 124–126; that span reads GTR.

This sequence belongs to the RNase PH family. Homohexameric ring arranged as a trimer of dimers.

The catalysed reaction is tRNA(n+1) + phosphate = tRNA(n) + a ribonucleoside 5'-diphosphate. Functionally, phosphorolytic 3'-5' exoribonuclease that plays an important role in tRNA 3'-end maturation. Removes nucleotide residues following the 3'-CCA terminus of tRNAs; can also add nucleotides to the ends of RNA molecules by using nucleoside diphosphates as substrates, but this may not be physiologically important. Probably plays a role in initiation of 16S rRNA degradation (leading to ribosome degradation) during starvation. This is Ribonuclease PH from Bacillus cereus (strain G9842).